The primary structure comprises 161 residues: ATP synthase subunit b (161 aa).

The helical transmembrane segment at 12 to 32 threads the bilayer; that stretch reads IAFFLFVFFCMKYIWPNLISL.

Belongs to the ATPase B chain family. As to quaternary structure, F-type ATPases have 2 components, F(1) - the catalytic core - and F(0) - the membrane proton channel. F(1) has five subunits: alpha(3), beta(3), gamma(1), delta(1), epsilon(1). F(0) has three main subunits: a(1), b(2) and c(10-14). The alpha and beta chains form an alternating ring which encloses part of the gamma chain. F(1) is attached to F(0) by a central stalk formed by the gamma and epsilon chains, while a peripheral stalk is formed by the delta and b chains.

It is found in the cell membrane. In terms of biological role, f(1)F(0) ATP synthase produces ATP from ADP in the presence of a proton or sodium gradient. F-type ATPases consist of two structural domains, F(1) containing the extramembraneous catalytic core and F(0) containing the membrane proton channel, linked together by a central stalk and a peripheral stalk. During catalysis, ATP synthesis in the catalytic domain of F(1) is coupled via a rotary mechanism of the central stalk subunits to proton translocation. Functionally, component of the F(0) channel, it forms part of the peripheral stalk, linking F(1) to F(0). This is ATP synthase subunit b from Wigglesworthia glossinidia brevipalpis.